A 332-amino-acid chain; its full sequence is Anthranilate phosphoribosyltransferase (332 aa).

Residues Gly-79, 82–83 (GD), Thr-87, 89–92 (NIST), 107–115 (KHGNYGATS), and Ala-119 contribute to the 5-phospho-alpha-D-ribose 1-diphosphate site. Gly-79 contributes to the anthranilate binding site. Ser-91 provides a ligand contact to Mg(2+). Asn-110 provides a ligand contact to anthranilate. Arg-165 contacts anthranilate. Mg(2+) is bound by residues Asp-223 and Glu-224.

The protein belongs to the anthranilate phosphoribosyltransferase family. Homodimer. It depends on Mg(2+) as a cofactor.

It carries out the reaction N-(5-phospho-beta-D-ribosyl)anthranilate + diphosphate = 5-phospho-alpha-D-ribose 1-diphosphate + anthranilate. Its pathway is amino-acid biosynthesis; L-tryptophan biosynthesis; L-tryptophan from chorismate: step 2/5. In terms of biological role, catalyzes the transfer of the phosphoribosyl group of 5-phosphorylribose-1-pyrophosphate (PRPP) to anthranilate to yield N-(5'-phosphoribosyl)-anthranilate (PRA). The sequence is that of Anthranilate phosphoribosyltransferase from Bacteroides thetaiotaomicron (strain ATCC 29148 / DSM 2079 / JCM 5827 / CCUG 10774 / NCTC 10582 / VPI-5482 / E50).